The following is a 202-amino-acid chain: Urease accessory protein UreG (202 aa).

Gly11–Thr18 contributes to the GTP binding site.

The protein belongs to the SIMIBI class G3E GTPase family. UreG subfamily. As to quaternary structure, homodimer. UreD, UreF and UreG form a complex that acts as a GTP-hydrolysis-dependent molecular chaperone, activating the urease apoprotein by helping to assemble the nickel containing metallocenter of UreC. The UreE protein probably delivers the nickel.

The protein localises to the cytoplasm. Functionally, facilitates the functional incorporation of the urease nickel metallocenter. This process requires GTP hydrolysis, probably effectuated by UreG. The sequence is that of Urease accessory protein UreG from Prochlorococcus marinus (strain MIT 9313).